A 161-amino-acid polypeptide reads, in one-letter code: Early E3 17.7 kDa glycoprotein (161 aa).

N-linked (GlcNAc...) asparagine; by host glycans are attached at residues N14 and N87. Residues I102–N129 traverse the membrane as a helical segment.

It localises to the host membrane. This chain is Early E3 17.7 kDa glycoprotein, found in Murine adenovirus A serotype 1 (MAdV-1).